The sequence spans 1196 residues: RNA-dependent RNA polymerase 6 (1196 aa).

Belongs to the RdRP family. In terms of assembly, interacts with SGS3. Widely expressed.

The protein resides in the cytoplasmic granule. It is found in the nucleus. The catalysed reaction is RNA(n) + a ribonucleoside 5'-triphosphate = RNA(n+1) + diphosphate. In terms of biological role, RNA-dependent RNA polymerase involved in post-transcriptional gene silencing (PTGS). Possesses ssRNA and ssDNA-dependent polymerase activity, but does not have priming activity. Possesses in vitro 3' nucleotidyltransferase activity in the presence of UTP as single nucleotide. Required for the production of 21 nucleotide trans-acting small interfering RNAs (ta-siRNAs) derived from TAS1, TAS2 and TAS3 endogenous transcripts. Acts in the RDR6/SGS3/DCL4/AGO7 ta-siRNA pathway involved in leaf developmental timing. Required for the production of natural siRNAs (nat-siRNAs) derived from cis-natural antisense transcripts. Required for the production of 24 nucleotide nat-siRNAs derived from the stress-related P5CDH-SRO5 antisense gene pair. Required for PTGS induced by transgene direct repeats. Plays an essential role in transitive silencing of transgenes by processing secondary siRNAs. This pathway, which requires DCL2 and DCL4, amplifies silencing by using the target RNA as substrate to generate secondary siRNAs, providing an efficient mechanism for long-distance silencing. Involved in the biogenesis of secondary siRNAs which require 22 nucleotide miRNAs associated to AGO1. Participates synergistically with AS1 and AS2 to proper plant development by repressing the miR165 and miR166 microRNAs (independently of AGO10) that may lead to mRNA degradation of genes in the class III HD-ZIP family. Required for the production of some small RNAs derived from the crucifer-infecting tobamovirus (TMV-cg). Required for sense virus-induced post-transcriptional gene silencing (S-PTGS). This is RNA-dependent RNA polymerase 6 (RDR6) from Arabidopsis thaliana (Mouse-ear cress).